The chain runs to 129 residues: Large ribosomal subunit protein bL17 (129 aa).

It belongs to the bacterial ribosomal protein bL17 family. Part of the 50S ribosomal subunit. Contacts protein L32.

This Pseudomonas aeruginosa (strain UCBPP-PA14) protein is Large ribosomal subunit protein bL17.